Reading from the N-terminus, the 274-residue chain is MSSYLQESTRKAVTVTSLQGMRAAGERIAMLTAYDASFAALMERSGVDVVLVGDSLGNVVQGQKTTLPVTLDHIVYHTECVARGTTKALLMSDLPFGTYGTPEQAFHSAVRVMQAGAQMVKLEGGEWLAPTLRFLVERSIPVCAHIGLTPQSVHAFGGFKVQGRGDEAAAQLKADALAVQDAGAQMVLMEAIPATLAGEVTRLLAVPTIGIGAGPECSGQVLVMHDMLGVFPGHRPKFVRNFMDGLTTIDAAVTAYVTAVKDGTFPGPEHSFTA.

The Mg(2+) site is built by Asp-54 and Asp-93. Residues 54–55, Asp-93, and Lys-121 contribute to the 3-methyl-2-oxobutanoate site; that span reads DS. Glu-123 is a Mg(2+) binding site. The Proton acceptor role is filled by Glu-190.

This sequence belongs to the PanB family. As to quaternary structure, homodecamer; pentamer of dimers. It depends on Mg(2+) as a cofactor.

The protein resides in the cytoplasm. It catalyses the reaction 3-methyl-2-oxobutanoate + (6R)-5,10-methylene-5,6,7,8-tetrahydrofolate + H2O = 2-dehydropantoate + (6S)-5,6,7,8-tetrahydrofolate. It participates in cofactor biosynthesis; (R)-pantothenate biosynthesis; (R)-pantoate from 3-methyl-2-oxobutanoate: step 1/2. Functionally, catalyzes the reversible reaction in which hydroxymethyl group from 5,10-methylenetetrahydrofolate is transferred onto alpha-ketoisovalerate to form ketopantoate. The sequence is that of 3-methyl-2-oxobutanoate hydroxymethyltransferase from Ralstonia nicotianae (strain ATCC BAA-1114 / GMI1000) (Ralstonia solanacearum).